Consider the following 283-residue polypeptide: Light-independent protochlorophyllide reductase iron-sulfur ATP-binding protein (283 aa).

ATP contacts are provided by residues 15 to 20 and Lys-44; that span reads GIGKST. Ser-19 is a Mg(2+) binding site. The [4Fe-4S] cluster site is built by Cys-100 and Cys-134. 185 to 186 lines the ATP pocket; it reads NR.

The protein belongs to the NifH/BchL/ChlL family. As to quaternary structure, homodimer. Protochlorophyllide reductase is composed of three subunits; ChlL, ChlN and ChlB. It depends on [4Fe-4S] cluster as a cofactor.

The enzyme catalyses chlorophyllide a + oxidized 2[4Fe-4S]-[ferredoxin] + 2 ADP + 2 phosphate = protochlorophyllide a + reduced 2[4Fe-4S]-[ferredoxin] + 2 ATP + 2 H2O. It functions in the pathway porphyrin-containing compound metabolism; chlorophyll biosynthesis (light-independent). Component of the dark-operative protochlorophyllide reductase (DPOR) that uses Mg-ATP and reduced ferredoxin to reduce ring D of protochlorophyllide (Pchlide) to form chlorophyllide a (Chlide). This reaction is light-independent. The L component serves as a unique electron donor to the NB-component of the complex, and binds Mg-ATP. The polypeptide is Light-independent protochlorophyllide reductase iron-sulfur ATP-binding protein (Synechococcus sp. (strain JA-2-3B'a(2-13)) (Cyanobacteria bacterium Yellowstone B-Prime)).